Here is a 330-residue protein sequence, read N- to C-terminus: Endochitinase Ziz m 1.0101 (330 aa).

Residues 1 to 24 (MVPQAKLVVASLILTSALIQTSEA) form the signal peptide. Positions 26-330 (GGIATYWGQY…LRTKFMYQNA (305 aa)) constitute a GH18 domain. 3 disulfides stabilise this stretch: Cys47–Cys90, Cys77–Cys80, and Cys187–Cys219. The interval 72 to 86 (NISGHCSDCTFLGEE) is binds to IgE in 70% of the 10 patients tested allergic to Indian jujube and latex. The segment at 292-301 (VWNRYYDLKT) is binds to IgE in 100% of the 10 patients tested allergic to Indian jujube and latex; sufficient for prediction of the presence of allergic reactions in these patients. Binds to IgE in 70% of the 10 patients tested allergic to Indian jujube and latex regions lie at residues 300–311 (KTNYSSSIILEY) and 309–320 (LEYVNSGTKYLP).

It belongs to the glycosyl hydrolase 18 family. Chitinase class II subfamily.

Its subcellular location is the secreted. The enzyme catalyses Random endo-hydrolysis of N-acetyl-beta-D-glucosaminide (1-&gt;4)-beta-linkages in chitin and chitodextrins.. Its function is as follows. Defense against chitin containing fungal pathogens. This Ziziphus mauritiana (Indian jujube) protein is Endochitinase Ziz m 1.0101.